A 278-amino-acid chain; its full sequence is Methyltransferase adrK (278 aa).

Residues 124 to 125 (DL), 151 to 152 (DV), and 152 to 153 (VL) each bind S-adenosyl-L-methionine.

The protein belongs to the class I-like SAM-binding methyltransferase superfamily. Homodimer.

It participates in secondary metabolite biosynthesis; terpenoid biosynthesis. In terms of biological role, methyltransferase; part of the gene cluster that mediates the biosynthesis of andrastins, meroterpenoid compounds that exhibit inhibitory activity against ras farnesyltransferase, suggesting that they could be promising leads for antitumor agents. The first step of the pathway is the synthesis of 3,5-dimethylorsellinic acid (DMOA) by the polyketide synthase adrD via condensation of one acetyl-CoA starter unit with 3 malonyl-CoA units and 2 methylations. DMAO is then converted to farnesyl-DMAO by the prenyltransferase adrG. The methyltransferase adrK catalyzes the methylation of the carboxyl group of farnesyl-DMAO to farnesyl-DMAO methyl ester which is further converted to epoxyfarnesyl-DMAO methyl ester by the FAD-dependent monooxygenase adrH. The terpene cyclase adrI then catalyzes the carbon skeletal rearrangement to generate the andrastin E, the first compound in the pathway having the andrastin scaffold, with the tetracyclic ring system. The post-cyclization tailoring enzymes adrF, adrE, adrJ, and adrA, are involved in the conversion of andrastin E into andrastin A. The short chain dehydrogenase adrF is responsible for the oxidation of the C-3 a hydroxyl group of andrastin E to yield the corresponding ketone, andrastin D. The ketoreductase adrE stereoselectively reduces the carbonyl moiety to reverse the stereochemistry of the C-3 position to yield andrastin F. The acetyltransferase adrJ is the acetyltransferase that attaches the acetyl group to the C-3 hydroxyl group of andrastin F to yield andrastin C. Finally, the cytochrome P450 monooxygenase adrA catalyzes two sequential oxidation reactions of the C-23 methyl group, to generate the corresponding alcohol andrastin B, and aldehyde andrastin A. This chain is Methyltransferase adrK, found in Penicillium roqueforti.